The sequence spans 734 residues: Diacylglycerol kinase alpha (734 aa).

EF-hand domains lie at 109 to 144 (RPEDKLEFTFKLYDTDRNGILDSSEVDRIIIQMMRM) and 154 to 189 (ELRPILQEMMKEIDYDGSGSVSLAEWLRAGATTVPL). Ca(2+) contacts are provided by aspartate 122, aspartate 124, asparagine 126, glutamate 133, aspartate 167, aspartate 169, serine 171, serine 173, and glutamate 178. Phorbol-ester/DAG-type zinc fingers lie at residues 204-252 (QHMW…ALPC) and 268-318 (SHVW…GHEC). Residues 371 to 505 (SNTHPLLVFV…MDRWSVEVIP (135 aa)) enclose the DAGKc domain. Residue lysine 483 is modified to N6-acetyllysine.

The protein belongs to the eukaryotic diacylglycerol kinase family. As to quaternary structure, monomer.

The protein resides in the cytoplasm. It is found in the cytosol. It catalyses the reaction a 1,2-diacyl-sn-glycerol + ATP = a 1,2-diacyl-sn-glycero-3-phosphate + ADP + H(+). It carries out the reaction a 1-O-alkyl-sn-glycerol + ATP = a 1-O-alkyl-sn-glycero-3-phosphate + ADP + H(+). The enzyme catalyses 1-O-alkyl-2-acyl-sn-glycerol + ATP = 1-O-alkyl-2-acyl-sn-glycero-3-phosphate + ADP + H(+). The catalysed reaction is 1,2-dihexadecanoyl-sn-glycerol + ATP = 1,2-dihexadecanoyl-sn-glycero-3-phosphate + ADP + H(+). It catalyses the reaction 1-hexadecanoyl-2-(9Z-octadecenoyl)-sn-glycerol + ATP = 1-hexadecanoyl-2-(9Z-octadecenoyl)-sn-glycero-3-phosphate + ADP + H(+). It carries out the reaction 2-(9Z-octadecenoyl)-glycerol + ATP = 2-(9Z-octadecenoyl)-sn-glycero-3-phosphate + ADP + H(+). The enzyme catalyses 1,2-di-(9Z-octadecenoyl)-sn-glycerol + ATP = 1,2-di-(9Z-octadecenoyl)-sn-glycero-3-phosphate + ADP + H(+). The catalysed reaction is 1-octadecanoyl-2-(5Z,8Z,11Z,14Z-eicosatetraenoyl)-sn-glycerol + ATP = 1-octadecanoyl-2-(5Z,8Z,11Z,14Z-eicosatetraenoyl)-sn-glycero-3-phosphate + ADP + H(+). It catalyses the reaction 1,2-didecanoyl-sn-glycerol + ATP = 1,2-didecanoyl-sn-glycero-3-phosphate + ADP + H(+). It carries out the reaction 1-O-hexadecyl-2-acetyl-sn-glycerol + ATP = 1-O-hexadecyl-2-acetyl-sn-glycero-3-phosphate + ADP + H(+). The enzyme catalyses 1-O-hexadecyl-2-(5Z,8Z,11Z,14Z-eicosatetraenoyl)-sn-glycerol + ATP = 1-O-hexadecyl-2-(5Z,8Z,11Z,14Z-eicosatetraenoyl)-sn-glycero-3-phosphate + ADP + H(+). The catalysed reaction is 1-O-hexadecyl-2-(9Z-octadecenoyl)-sn-glycerol + ATP = 1-O-hexadecyl-2-(9Z-octadecenoyl)-sn-glycero-3-phosphate + ADP + H(+). It catalyses the reaction 1-O-hexadecyl-sn-glycerol + ATP = 1-O-hexadecyl-sn-glycero-3-phosphate + ADP + H(+). Its pathway is lipid metabolism; glycerolipid metabolism. Its activity is regulated as follows. Stimulated by calcium and phosphatidylserine. Diacylglycerol kinase that converts diacylglycerol/DAG into phosphatidic acid/phosphatidate/PA and regulates the respective levels of these two bioactive lipids. Thereby, acts as a central switch between the signaling pathways activated by these second messengers with different cellular targets and opposite effects in numerous biological processes. Also plays an important role in the biosynthesis of complex lipids. Can also phosphorylate 1-alkyl-2-acylglycerol in vitro as efficiently as diacylglycerol provided it contains an arachidonoyl group. Also involved in the production of alkyl-lysophosphatidic acid, another bioactive lipid, through the phosphorylation of 1-alkyl-2-acetyl glycerol. The chain is Diacylglycerol kinase alpha (DGKA) from Bos taurus (Bovine).